The following is a 293-amino-acid chain: MNTEPSSAGPEPASLQRIALSLQYDGSSFCGWQRQRNGRSVQAVLEDAIAQLDPHRPVQTFAAGRTDAGVHAAGQVVHFDCSGPIPARKWAPALNGRLPSTIRVRESVARPLDWHACYSATYRRYRYTIHNGRRPNLFLSPWSWHCYQHRLDESRMRDALSSMLGLHDFSAFMKAGSRRAHARTTVQEVLVERQGDLLRVEIQASGFLYGMVRLLMAQLVAVGEHRLSVAAFEQRWRERRRHEVKEAAPAAGLCLLRAGYAKPIFTKAGWYDSQPWFFLAESDPPTDPPSTPG.

Catalysis depends on Asp67, which acts as the Nucleophile. Tyr125 serves as a coordination point for substrate.

This sequence belongs to the tRNA pseudouridine synthase TruA family. In terms of assembly, homodimer.

The catalysed reaction is uridine(38/39/40) in tRNA = pseudouridine(38/39/40) in tRNA. In terms of biological role, formation of pseudouridine at positions 38, 39 and 40 in the anticodon stem and loop of transfer RNAs. The sequence is that of tRNA pseudouridine synthase A from Synechococcus sp. (strain CC9605).